The primary structure comprises 106 residues: L-rhamnose mutarotase (106 aa).

Tyr-20 lines the substrate pocket. The active-site Proton donor is the His-24. Residues Tyr-43 and 78–79 (WW) contribute to the substrate site.

It belongs to the rhamnose mutarotase family. As to quaternary structure, homodimer.

The protein resides in the cytoplasm. The catalysed reaction is alpha-L-rhamnose = beta-L-rhamnose. It participates in carbohydrate metabolism; L-rhamnose metabolism. Functionally, involved in the anomeric conversion of L-rhamnose. The protein is L-rhamnose mutarotase of Brucella anthropi (strain ATCC 49188 / DSM 6882 / CCUG 24695 / JCM 21032 / LMG 3331 / NBRC 15819 / NCTC 12168 / Alc 37) (Ochrobactrum anthropi).